A 417-amino-acid polypeptide reads, in one-letter code: MFPRDARLDMYDPELAKAIAAEVMRQEDHVELIASENYCSTLVMQVQGSQLTNKYAEGYSGKRYYGGCECVDIAEQLAIERAKQLFGADYANVQPHSGSQANQAVYFALLQPGDTILGMSLAHGGHLTHGANVNVSGKLFNAVQYGVNGQGLIDYEAVESLALEHRPKMVVAGFSAYSQKIDWARFRAIADQVGAYLLVDMAHVAGLVAACVYPNPLPHAHVVTSTTHKTLRGPRGGIIVAQAPQEALVKKLQSIVFPGIQGGPLMHVIAAKAVAFKEALEPAFKVYQQQVVKNAKAMAETLMLRGYKIVSGGTENHLMLVDMIGRDVSGKDAEGALGQAHITVNKNAVPDDPRSPFVTSGLRLGTPAVTTRGYQEQDCVDLAHWIADVLDAPADATVIAAVREKVAAQCRKYPVYR.

Residues Leu-121 and 125–127 (GHL) contribute to the (6S)-5,6,7,8-tetrahydrofolate site. Position 229 is an N6-(pyridoxal phosphate)lysine (Lys-229). (6S)-5,6,7,8-tetrahydrofolate is bound at residue 355 to 357 (SPF).

This sequence belongs to the SHMT family. As to quaternary structure, homodimer. It depends on pyridoxal 5'-phosphate as a cofactor.

It is found in the cytoplasm. The catalysed reaction is (6R)-5,10-methylene-5,6,7,8-tetrahydrofolate + glycine + H2O = (6S)-5,6,7,8-tetrahydrofolate + L-serine. It functions in the pathway one-carbon metabolism; tetrahydrofolate interconversion. Its pathway is amino-acid biosynthesis; glycine biosynthesis; glycine from L-serine: step 1/1. In terms of biological role, catalyzes the reversible interconversion of serine and glycine with tetrahydrofolate (THF) serving as the one-carbon carrier. This reaction serves as the major source of one-carbon groups required for the biosynthesis of purines, thymidylate, methionine, and other important biomolecules. Also exhibits THF-independent aldolase activity toward beta-hydroxyamino acids, producing glycine and aldehydes, via a retro-aldol mechanism. This chain is Serine hydroxymethyltransferase, found in Xylella fastidiosa (strain 9a5c).